The chain runs to 717 residues: DNA-directed RNA polymerase subunit beta' (717 aa).

4 residues coordinate Zn(2+): Cys71, Cys73, Cys91, and Cys94. The Mg(2+) site is built by Asp481, Asp483, and Asp485.

Belongs to the RNA polymerase beta' chain family. RpoC1 subfamily. In terms of assembly, in plastids the minimal PEP RNA polymerase catalytic core is composed of four subunits: alpha, beta, beta', and beta''. When a (nuclear-encoded) sigma factor is associated with the core the holoenzyme is formed, which can initiate transcription. It depends on Mg(2+) as a cofactor. Zn(2+) is required as a cofactor.

The protein localises to the plastid. It localises to the chloroplast. The catalysed reaction is RNA(n) + a ribonucleoside 5'-triphosphate = RNA(n+1) + diphosphate. In terms of biological role, DNA-dependent RNA polymerase catalyzes the transcription of DNA into RNA using the four ribonucleoside triphosphates as substrates. In Chlorokybus atmophyticus (Soil alga), this protein is DNA-directed RNA polymerase subunit beta'.